Here is a 644-residue protein sequence, read N- to C-terminus: Macrolide export ATP-binding/permease protein MacB (644 aa).

The region spanning 7-245 (IELQDITRSF…IPETDQNGRR (239 aa)) is the ABC transporter domain. Residue 43–50 (GPSGSGKS) coordinates ATP. 4 consecutive transmembrane segments (helical) span residues 271 to 291 (ALTL…LAIG), 526 to 546 (IAAI…LVSV), 570 to 590 (FLTE…VIGI), and 607 to 627 (LLPM…FGFL).

This sequence belongs to the ABC transporter superfamily. Macrolide exporter (TC 3.A.1.122) family. As to quaternary structure, homodimer. Part of the tripartite efflux system MacAB-TolC, which is composed of an inner membrane transporter, MacB, a periplasmic membrane fusion protein, MacA, and an outer membrane component, TolC. The complex forms a large protein conduit and can translocate molecules across both the inner and outer membranes. Interacts with MacA.

The protein localises to the cell inner membrane. Functionally, part of the tripartite efflux system MacAB-TolC. MacB is a non-canonical ABC transporter that contains transmembrane domains (TMD), which form a pore in the inner membrane, and an ATP-binding domain (NBD), which is responsible for energy generation. Confers resistance against macrolides. The protein is Macrolide export ATP-binding/permease protein MacB of Marinobacter nauticus (strain ATCC 700491 / DSM 11845 / VT8) (Marinobacter aquaeolei).